The sequence spans 206 residues: Protein Nef (206 aa).

Gly-2 carries N-myristoyl glycine; by host lipidation. Ser-6 bears the Phosphoserine; by host mark. The tract at residues 62–65 (EEEK) is acidic; interacts with host PACS1 and PACS2; stabilizes the interaction of NEF/MHC-I with host AP1M1; necessary for MHC-I internalization. Positions 69–78 (PVTPQVPLRP) are SH3-binding; interaction with Src family tyrosine kinases. A PxxP; stabilizes the interaction of NEF/MHC-I with host AP1M1; necessary for MHC-I internalization motif is present at residues 72–75 (PQVP). Residues 108–124 (DILDLWIYHTQGYFPDW) are mediates dimerization, Nef-PTE1 interaction. Positions 148 to 180 (VEPEKLEEANKGENTSLLHPVSLHGMDDPEREV) are binding to ATP6V1H. The Dileucine internalization motif; necessary for CD4 internalization signature appears at 164 to 165 (LL). The short motif at 174 to 175 (DD) is the Diacidic; necessary for CD4 internalization element.

It belongs to the lentivirus primate group Nef protein family. Monomer; cytosolic form. Homodimer; membrane bound form. Interacts with Nef associated p21-activated kinase (PAK2); this interaction activates PAK2. Associates with the Nef-MHC-I-AP1 complex; this complex is required for MHC-I internalization. Interacts (via C-terminus) with host PI3-kinase. Interacts with host PACS1; this interaction seems to be weak. Interacts with host PACS2. Interacts with host LCK and MAPK3; these interactions inhibit the kinase activity of the latter. Interacts with host ATP6V1H; this interaction may play a role in CD4 endocytosis. Associates with the CD4-Nef-AP2 complex; this complex is required for CD4 internalization. Interacts with host AP2 subunit alpha and AP2 subunit sigma2. Interacts with TCR-zeta chain; this interaction up-regulates the Fas ligand (FasL) surface expression. Interacts with host HCK, LYN, and SRC; these interactions activate the Src family kinases. Interacts with MAP3K5; this interaction inhibits the Fas and TNFR-mediated death signals. Interacts with beta-COP and PTE1. Interacts with human RACK1; this increases Nef phosphorylation by PKC. Interacts with TP53; this interaction decreases the half-life of TP53, protecting the infected cell against p53-mediated apoptosis. The virion-associated Nef proteins are cleaved by the viral protease to release the soluble C-terminal core protein. Nef is probably cleaved concomitantly with viral structural proteins on maturation of virus particles. Post-translationally, myristoylated. In terms of processing, phosphorylated on serine residues, probably by host PKCdelta and theta.

The protein resides in the host cell membrane. It localises to the virion. Its subcellular location is the secreted. It is found in the host Golgi apparatus membrane. Functionally, factor of infectivity and pathogenicity, required for optimal virus replication. Alters numerous pathways of T-lymphocyte function and down-regulates immunity surface molecules in order to evade host defense and increase viral infectivity. Alters the functionality of other immunity cells, like dendritic cells, monocytes/macrophages and NK cells. Its function is as follows. In infected CD4(+) T-lymphocytes, down-regulates the surface MHC-I, mature MHC-II, CD4, CD28, CCR5 and CXCR4 molecules. Mediates internalization and degradation of host CD4 through the interaction of with the cytoplasmic tail of CD4, the recruitment of AP-2 (clathrin adapter protein complex 2), internalization through clathrin coated pits, and subsequent transport to endosomes and lysosomes for degradation. Diverts host MHC-I molecules to the trans-Golgi network-associated endosomal compartments by an endocytic pathway to finally target them for degradation. MHC-I down-regulation may involve AP-1 (clathrin adapter protein complex 1) or possibly Src family kinase-ZAP70/Syk-PI3K cascade recruited by PACS2. In consequence infected cells are masked for immune recognition by cytotoxic T-lymphocytes. Decreasing the number of immune receptors also prevents reinfection by more HIV particles (superinfection). Down-regulates host SERINC3 and SERINC5 thereby excluding these proteins from the viral particles. Virion infectivity is drastically higher when SERINC3 or SERINC5 are excluded from the viral envelope, because these host antiviral proteins impair the membrane fusion event necessary for subsequent virion penetration. Bypasses host T-cell signaling by inducing a transcriptional program nearly identical to that of anti-CD3 cell activation. Interaction with TCR-zeta chain up-regulates the Fas ligand (FasL). Increasing surface FasL molecules and decreasing surface MHC-I molecules on infected CD4(+) cells send attacking cytotoxic CD8+ T-lymphocytes into apoptosis. In terms of biological role, plays a role in optimizing the host cell environment for viral replication without causing cell death by apoptosis. Protects the infected cells from apoptosis in order to keep them alive until the next virus generation is ready to strike. Inhibits the Fas and TNFR-mediated death signals by blocking MAP3K5/ASK1. Decreases the half-life of TP53, protecting the infected cell against p53-mediated apoptosis. Inhibits the apoptotic signals regulated by the Bcl-2 family proteins through the formation of a Nef/PI3-kinase/PAK2 complex that leads to activation of PAK2 and induces phosphorylation of host BAD. Functionally, extracellular Nef protein targets CD4(+) T-lymphocytes for apoptosis by interacting with CXCR4 surface receptors. The protein is Protein Nef of Homo sapiens (Human).